Reading from the N-terminus, the 469-residue chain is Aspartyl/glutamyl-tRNA(Asn/Gln) amidotransferase subunit B (469 aa).

It belongs to the GatB/GatE family. GatB subfamily. As to quaternary structure, heterotrimer of A, B and C subunits.

It catalyses the reaction L-glutamyl-tRNA(Gln) + L-glutamine + ATP + H2O = L-glutaminyl-tRNA(Gln) + L-glutamate + ADP + phosphate + H(+). It carries out the reaction L-aspartyl-tRNA(Asn) + L-glutamine + ATP + H2O = L-asparaginyl-tRNA(Asn) + L-glutamate + ADP + phosphate + 2 H(+). In terms of biological role, allows the formation of correctly charged Asn-tRNA(Asn) or Gln-tRNA(Gln) through the transamidation of misacylated Asp-tRNA(Asn) or Glu-tRNA(Gln) in organisms which lack either or both of asparaginyl-tRNA or glutaminyl-tRNA synthetases. The reaction takes place in the presence of glutamine and ATP through an activated phospho-Asp-tRNA(Asn) or phospho-Glu-tRNA(Gln). This Methanococcus maripaludis (strain C6 / ATCC BAA-1332) protein is Aspartyl/glutamyl-tRNA(Asn/Gln) amidotransferase subunit B.